Consider the following 99-residue polypeptide: Small ribosomal subunit protein bS20 (99 aa).

Over residues 1–20 (MASAKPKKKNPRLASGRKRA) the composition is skewed to basic residues. The tract at residues 1–29 (MASAKPKKKNPRLASGRKRARQDVKLNAA) is disordered.

It belongs to the bacterial ribosomal protein bS20 family.

In terms of biological role, binds directly to 16S ribosomal RNA. This Paracidovorax citrulli (strain AAC00-1) (Acidovorax citrulli) protein is Small ribosomal subunit protein bS20.